A 122-amino-acid polypeptide reads, in one-letter code: Large ribosomal subunit protein bL12 (122 aa).

This sequence belongs to the bacterial ribosomal protein bL12 family. As to quaternary structure, homodimer. Part of the ribosomal stalk of the 50S ribosomal subunit. Forms a multimeric L10(L12)X complex, where L10 forms an elongated spine to which 2 to 4 L12 dimers bind in a sequential fashion. Binds GTP-bound translation factors.

Functionally, forms part of the ribosomal stalk which helps the ribosome interact with GTP-bound translation factors. Is thus essential for accurate translation. In Vibrio parahaemolyticus serotype O3:K6 (strain RIMD 2210633), this protein is Large ribosomal subunit protein bL12.